The primary structure comprises 304 residues: MTKKIKCALIGPGNIGTDLLAKLQRSAVLEPVWMVGIDPESDGLKRAREMGIKTTADGVDGLIPHMQADGVQIVFDATSAYVHAENSRKVNAQGALMIDLTPAAIGPFCVPPVNLIEHVGKGEMNVNMVTCGGQATIPMVAAVSRVQPVAYGEIIATVSSKSAGPGTRKNIDEFTRTTASAVEKVGGAKKGKAIIILNPAEPPLIMRDTVHCLLESEPDQAKITESIHAMIQEVQKYVPGYKLVNGPVFDGKRVSVFLEVEGLGDYLPKYAGNLDIMTAAAARTAEMFAEEILAGRLTLKPVHA.

Cys131 serves as the catalytic Acyl-thioester intermediate. NAD(+) is bound by residues 162–170 (SAGPGTRKN) and Asn273.

This sequence belongs to the acetaldehyde dehydrogenase family.

The enzyme catalyses acetaldehyde + NAD(+) + CoA = acetyl-CoA + NADH + H(+). The chain is Acetaldehyde dehydrogenase from Polaromonas naphthalenivorans (strain CJ2).